We begin with the raw amino-acid sequence, 359 residues long: Aflatoxin B1 aldehyde reductase member 2 (359 aa).

The transit peptide at 1-38 directs the protein to the mitochondrion; it reads MLSAASRVVSRAAVHCALRSPPPEARALAMSRPPPPRV. S40 bears the Phosphoserine mark. Residue D72 coordinates NADP(+). Residue Y77 is the Proton donor of the active site. N6-acetyllysine is present on K128. H141 contributes to the substrate binding site. NADP(+)-binding positions include 171–172, Q197, 226–236, and R250; these read SN and NPLAGGLLTGK. K236 carries the N6-succinyllysine modification. S255 carries the post-translational modification Phosphoserine. Substrate-binding residues include Y260 and R263. 318–326 serves as a coordination point for NADP(+); the sequence is SSLEQLEQN. R359 is a binding site for substrate.

The protein belongs to the aldo/keto reductase family. Aldo/keto reductase 2 subfamily. Homodimer. Detected in brain, liver, small intestine and testis, and at lower levels in heart, prostate, skeletal muscle and spleen. Detected in kidney proximal and distal tubules, endothelial cells lining the Bowman's capsules and some cysts. Detected at low levels in lung and pancreas (at protein level). Widely expressed.

The protein localises to the mitochondrion. It localises to the golgi apparatus. The protein resides in the cytoplasm. The enzyme catalyses 4-hydroxybutanoate + NADP(+) = succinate semialdehyde + NADPH + H(+). Catalyzes the NADPH-dependent reduction of succinic semialdehyde to gamma-hydroxybutyrate. May have an important role in producing the neuromodulator gamma-hydroxybutyrate (GHB). Has broad substrate specificity. Has NADPH-dependent aldehyde reductase activity towards 2-carboxybenzaldehyde, 2-nitrobenzaldehyde and pyridine-2-aldehyde (in vitro). Can reduce 1,2-naphthoquinone and 9,10-phenanthrenequinone (in vitro). Can reduce the dialdehyde protein-binding form of aflatoxin B1 (AFB1) to the non-binding AFB1 dialcohol. May be involved in protection of liver against the toxic and carcinogenic effects of AFB1, a potent hepatocarcinogen. This chain is Aflatoxin B1 aldehyde reductase member 2 (AKR7A2), found in Homo sapiens (Human).